The sequence spans 290 residues: MQQQINPEIIQEISDDLRVQVLTEALPYIQKWRNEIMVIKYGGAVVKQDADIIKDILFLTCCGFQIVVVHGGGPLINEWLKQLNKSPQYWEGIRVTDKVTMEIVEMVLAGKVNKQLVGSINANGGKAIGLCGKDANLIVAKASSKKELGLVGEIEQIHPQVIDMLLEKHYIPVIASVAASHDGTTYNLNADVVAGELAIKLKAKKLIFLTDTKGILADINNENSVISTLNLKEAKNLANTISGGMIPKVNACICAVENGVEAAHIIGGKEKHQLLLELLTEKGRGSMIVV.

Substrate-binding positions include 72–73, Arg-94, and Asn-187; that span reads GG.

This sequence belongs to the acetylglutamate kinase family. ArgB subfamily.

The protein resides in the plastid. Its subcellular location is the chloroplast. It carries out the reaction N-acetyl-L-glutamate + ATP = N-acetyl-L-glutamyl 5-phosphate + ADP. The protein operates within amino-acid biosynthesis; L-arginine biosynthesis; N(2)-acetyl-L-ornithine from L-glutamate: step 2/4. Catalyzes the ATP-dependent phosphorylation of N-acetyl-L-glutamate. The protein is Acetylglutamate kinase of Cyanidioschyzon merolae (strain NIES-3377 / 10D) (Unicellular red alga).